Reading from the N-terminus, the 589-residue chain is MNEQIKDKLKKIPHKPGCYLWKDKNGIVIYVGKAVDLANRIKQYFLKDRDLKTKKLANEICDVDYVVVNNENESLLLENNLIAKYKPKYNMLLRESNAFPYILVTKEEHPRILYSHDSTKKIKGTYYGPFANSNIKKYELYNFINRIFPLRKCNKLPNKKCIYYDIGQCLGPCIKKVTRQDYEPYLKEINDFFSGKSKSIDEQLEKKEIQAAEKLMFEDSQKYLELRKNLKMFSERQDIIFSQKNDEDIIGFYCKENVISIVIFKYVNGSLLSKYDLITVFYSELDEILLTLIYEYYSKIAIELPKTVYLSLSDEKLKTLSESLKIKFLNPSKGVKKDVMDTAFNNAVEIMKNKYLQLISNQNRELNSLEELQKLLDIKDLYRMEIFDNSNIFNTNKVGAMVVYENGVKNKNEYRKFNIKDEDANSDYDYMKEVIYRRYKNNTASFGEIPNLIIVDGGKPQVKAALESLKFLELDSIIPVIGLAKDDKHKTDRIVKWDFSEIKLDKKSDLYFFLLNIQDEVHRFAISFYRNKKSKSLFENSLYKIKNLGKTRIEKLLEKYETLDKIKEASVEELSQIVPIEVAKEIKKL.

In terms of domain architecture, GIY-YIG spans 14 to 91 (HKPGCYLWKD…IAKYKPKYNM (78 aa)).

This sequence belongs to the UvrC family. In terms of assembly, interacts with UvrB in an incision complex.

The protein localises to the cytoplasm. Its function is as follows. The UvrABC repair system catalyzes the recognition and processing of DNA lesions. UvrC both incises the 5' and 3' sides of the lesion. The N-terminal half is responsible for the 3' incision and the C-terminal half is responsible for the 5' incision. The polypeptide is UvrABC system protein C (Malacoplasma penetrans (strain HF-2) (Mycoplasma penetrans)).